Consider the following 218-residue polypeptide: Ribose-5-phosphate isomerase A (218 aa).

Substrate is bound by residues 28-31 (TGST), 81-84 (DGAD), and 94-97 (KGGG). The Proton acceptor role is filled by E103. K121 lines the substrate pocket.

The protein belongs to the ribose 5-phosphate isomerase family. As to quaternary structure, homodimer.

It carries out the reaction aldehydo-D-ribose 5-phosphate = D-ribulose 5-phosphate. It participates in carbohydrate degradation; pentose phosphate pathway; D-ribose 5-phosphate from D-ribulose 5-phosphate (non-oxidative stage): step 1/1. Its function is as follows. Catalyzes the reversible conversion of ribose-5-phosphate to ribulose 5-phosphate. The chain is Ribose-5-phosphate isomerase A from Shewanella sediminis (strain HAW-EB3).